A 525-amino-acid chain; its full sequence is Mitochondrial-processing peptidase subunit alpha (525 aa).

Residues 1–33 (MAAVVLAATRLLRGSGSWGCSRLRFGPPAYRRF) constitute a mitochondrion transit peptide. Residue Lys-64 is modified to N6-succinyllysine. Lys-299 carries the N6-acetyllysine modification.

It belongs to the peptidase M16 family. Heterodimer of PMPCA (alpha) and PMPCB (beta) subunits, forming the mitochondrial processing protease (MPP) in which PMPCA is involved in substrate recognition and binding and PMPCB is the catalytic subunit. As to expression, ubiquitously expressed with highest expression in fetal tissues and adult brain, cerebellum and cerebellar vermis.

Its subcellular location is the mitochondrion matrix. The protein localises to the mitochondrion inner membrane. Its function is as follows. Substrate recognition and binding subunit of the essential mitochondrial processing protease (MPP), which cleaves the mitochondrial sequence off newly imported precursors proteins. This is Mitochondrial-processing peptidase subunit alpha (PMPCA) from Homo sapiens (Human).